The primary structure comprises 184 residues: UPF0149 protein Pmen_0324 (184 aa).

Belongs to the UPF0149 family.

This Ectopseudomonas mendocina (strain ymp) (Pseudomonas mendocina) protein is UPF0149 protein Pmen_0324.